The primary structure comprises 759 residues: Tripartite motif-containing protein 46 (759 aa).

A required for proximal axon localization, axon formation and migration region spans residues 1–166 (MAEGEDMQTF…VERYRQSVSV (166 aa)). The RING-type 1; degenerate zinc finger occupies 33–59 (CPVCQEMYKQPLVLPCTHNVCQACARE). A disordered region spans residues 67–98 (IGHGGDPSSEPTSPASTPSTRSPRLSRRTLPK). The segment covering 73-89 (PSSEPTSPASTPSTRSP) has biased composition (low complexity). The RING-type 2; degenerate zinc finger occupies 172–231 (CQLCKPPPLEATKGCTECRATFCNECFKLFHPWGTQKAQHEPTLPTLSFRPKGLMCPDHK). The B box-type zinc-finger motif lies at 222 to 263 (PKGLMCPDHKEEVTHYCKTCQRLVCQLCRVRRTHSGHKITPV). Zn(2+) is bound by residues Cys227, His230, Cys249, and His255. Positions 322 to 400 (AVLEEKRASL…RATEALQTFR (79 aa)) form a coiled coil. Position 330 is a phosphoserine (Ser330). One can recognise a COS domain in the interval 370-427 (LKETDQPCFVQAAKQLHNRIARATEALQTFRPAASSSFRHCQLDVGREMKLLTELSFL). Residues 411-429 (QLDVGREMKLLTELSFLRV) are required for microtubule association, proximal axon localization and axon formation. Residues 429–528 (VPEAPVIDTQ…EDVHLHTPPA (100 aa)) form the Fibronectin type-III domain. In terms of domain architecture, B30.2/SPRY spans 526–747 (PPAPVLHFFL…LQEPVGTKPE (222 aa)). Ser627 is subject to Phosphoserine.

It belongs to the TRIM/RBCC family. As to quaternary structure, interacts with TUBB3 and TUBA4A. In terms of tissue distribution, expressed in the central nervous system, including pyramidal neurons and interneurons in the cortex and hippocampus and all neuronal cell types in the cerebral and cerebellar cortex, and in the peripheral nervous system, including the dorsal root ganglion neurons.

The protein localises to the cell projection. It is found in the axon. Its subcellular location is the cytoplasm. It localises to the cytoskeleton. Microtubule-associated protein that is involved in the formation of parallel microtubule bundles linked by cross-bridges in the proximal axon. Required for the uniform orientation and maintenance of the parallel microtubule fascicles, which are important for efficient cargo delivery and trafficking in axons. Thereby also required for proper axon formation, the establishment of neuronal polarity and proper neuronal migration. This is Tripartite motif-containing protein 46 (Trim46) from Mus musculus (Mouse).